We begin with the raw amino-acid sequence, 185 residues long: Photosystem I assembly protein Ycf4 (185 aa).

Helical transmembrane passes span 20 to 40 (GNFFWACILFLGSLGFLSVGA) and 57 to 77 (ILFFPQGVVMSFYGIAGLFIS).

The protein belongs to the Ycf4 family.

Its subcellular location is the plastid. It is found in the chloroplast thylakoid membrane. Its function is as follows. Seems to be required for the assembly of the photosystem I complex. This chain is Photosystem I assembly protein Ycf4, found in Agrostis stolonifera (Creeping bentgrass).